A 297-amino-acid polypeptide reads, in one-letter code: tRNA (guanine-N(7)-)-methyltransferase (297 aa).

The S-adenosyl-L-methionine site is built by Glu22, Glu47, Asp74, and Asp97. Asp97 is an active-site residue. Substrate-binding positions include Lys101, Asp133, and 165 to 168 (TKYE).

The protein belongs to the class I-like SAM-binding methyltransferase superfamily. TrmB family.

It catalyses the reaction guanosine(46) in tRNA + S-adenosyl-L-methionine = N(7)-methylguanosine(46) in tRNA + S-adenosyl-L-homocysteine. It functions in the pathway tRNA modification; N(7)-methylguanine-tRNA biosynthesis. Functionally, catalyzes the formation of N(7)-methylguanine at position 46 (m7G46) in tRNA. This Aquifex aeolicus (strain VF5) protein is tRNA (guanine-N(7)-)-methyltransferase.